The chain runs to 543 residues: uncharacterized protein (543 aa).

In terms of domain architecture, TRAM spans Met-1 to Lys-59. Residues Gln-283, Tyr-312, Glu-333, and Asp-381 each contribute to the S-adenosyl-L-methionine site. The Nucleophile role is filled by Cys-408.

The protein belongs to the class I-like SAM-binding methyltransferase superfamily. RNA M5U methyltransferase family.

This is an uncharacterized protein from Streptococcus pneumoniae serotype 4 (strain ATCC BAA-334 / TIGR4).